The primary structure comprises 206 residues: Accelerated cell death 11 (206 aa).

Positions 60, 64, 99, 103, and 143 each coordinate an N-acylsphingoid base 1-phosphate.

The protein belongs to the GLTP family. Interacts with BPA1, PRA1F2 and PRA1F3.

The protein resides in the cytoplasm. In terms of biological role, exhibits selective intermembrane transfer of ceramide-1-phosphate (C1P) and phytoceramide-1-phosphate. Does not transport ceramide (Cer) or GalCer, suggesting a requirement for phosphate in the headgroup for functionality. Transports in vitro sphingosine, but not glycosphingolipids. Also has some in vitro activity with sphingomyelin, a lipid not detected in plant tissues. The transport function may be not directly involved in regulating cell death. Rather, perturbations in the function of ACD11 or related components could be monitored by R-proteins, which then mediate defense and programmed cell death (PCD), as proposed in the guard hypothesis. C1P transfer is stimulated by phosphatidylserine in C1P source vesicles. Regulates autophagy, inflammasome mediated IL1B and IL18 processing, and pyroptosis, but not apoptosis. This Arabidopsis thaliana (Mouse-ear cress) protein is Accelerated cell death 11.